We begin with the raw amino-acid sequence, 210 residues long: FMN-dependent NADH:quinone oxidoreductase (210 aa).

Residues Ser9 and 15–17 each bind FMN; that span reads SHS.

It belongs to the azoreductase type 1 family. Homodimer. It depends on FMN as a cofactor.

The catalysed reaction is 2 a quinone + NADH + H(+) = 2 a 1,4-benzosemiquinone + NAD(+). It carries out the reaction N,N-dimethyl-1,4-phenylenediamine + anthranilate + 2 NAD(+) = 2-(4-dimethylaminophenyl)diazenylbenzoate + 2 NADH + 2 H(+). Quinone reductase that provides resistance to thiol-specific stress caused by electrophilic quinones. In terms of biological role, also exhibits azoreductase activity. Catalyzes the reductive cleavage of the azo bond in aromatic azo compounds to the corresponding amines. The sequence is that of FMN-dependent NADH:quinone oxidoreductase from Mesorhizobium japonicum (strain LMG 29417 / CECT 9101 / MAFF 303099) (Mesorhizobium loti (strain MAFF 303099)).